The primary structure comprises 201 residues: Small ribosomal subunit protein uS4 (201 aa).

The S4 RNA-binding domain occupies 93 to 156 (RRLDNMVYRL…KNLDIIKNAV (64 aa)).

The protein belongs to the universal ribosomal protein uS4 family. As to quaternary structure, part of the 30S ribosomal subunit. Contacts protein S5. The interaction surface between S4 and S5 is involved in control of translational fidelity.

One of the primary rRNA binding proteins, it binds directly to 16S rRNA where it nucleates assembly of the body of the 30S subunit. In terms of biological role, with S5 and S12 plays an important role in translational accuracy. The polypeptide is Small ribosomal subunit protein uS4 (Limosilactobacillus reuteri subsp. reuteri (strain JCM 1112) (Lactobacillus reuteri)).